Reading from the N-terminus, the 123-residue chain is Protein Wnt-3b (123 aa).

S1 carries the O-palmitoleoyl serine; by PORCN lipid modification. Cysteines 89 and 104 form a disulfide. N-linked (GlcNAc...) asparagine glycosylation occurs at N90.

Belongs to the Wnt family. In terms of processing, palmitoleoylation is required for efficient binding to frizzled receptors. Depalmitoleoylation leads to Wnt signaling pathway inhibition.

It is found in the secreted. The protein localises to the extracellular space. It localises to the extracellular matrix. Its function is as follows. Ligand for members of the frizzled family of seven transmembrane receptors. Probable developmental protein. May be a signaling molecule which affects the development of discrete regions of tissues. Is likely to signal over only few cell diameters. The polypeptide is Protein Wnt-3b (WNT-3B) (Plethodon jordani (Red-cheeked salamander)).